Here is a 393-residue protein sequence, read N- to C-terminus: Beta-1,3-galactosyltransferase 7 (393 aa).

Residues 9–29 traverse the membrane as a helical; Signal-anchor for type II membrane protein segment; sequence VISLKWVPFLCISFFALGAIF. Positions 89–112 are disordered; that stretch reads SLDKSVSTLSSTRSSQEMVDGSET. Residues 93-103 show a composition bias toward low complexity; that stretch reads SVSTLSSTRSS.

The protein belongs to the glycosyltransferase 31 family. It depends on Mn(2+) as a cofactor. In terms of tissue distribution, expressed in leaves, stems, flowers and siliques.

The protein localises to the golgi apparatus membrane. The protein operates within protein modification; protein glycosylation. Its function is as follows. Beta-1,3-galactosyltransferase that transfers galactose from UDP-galactose to substrates with a terminal glycosyl residue. The polypeptide is Beta-1,3-galactosyltransferase 7 (B3GALT7) (Arabidopsis thaliana (Mouse-ear cress)).